A 142-amino-acid polypeptide reads, in one-letter code: Large ribosomal subunit protein uL13 (142 aa).

This sequence belongs to the universal ribosomal protein uL13 family. In terms of assembly, part of the 50S ribosomal subunit.

Functionally, this protein is one of the early assembly proteins of the 50S ribosomal subunit, although it is not seen to bind rRNA by itself. It is important during the early stages of 50S assembly. The chain is Large ribosomal subunit protein uL13 from Citrifermentans bemidjiense (strain ATCC BAA-1014 / DSM 16622 / JCM 12645 / Bem) (Geobacter bemidjiensis).